Here is a 428-residue protein sequence, read N- to C-terminus: Zinc metalloproteinase nas-27 (428 aa).

The N-terminal stretch at 1 to 17 (MQILPIFFPLLITSLHA) is a signal peptide. Residues 18–57 (IPRGRRAVRNRNEGDINSLVGVGQYLYQGDIAVVKSRARR) constitute a propeptide that is removed on maturation. Residues 58 to 255 (AVIRQKHKKW…SRMNVLYNCH (198 aa)) enclose the Peptidase M12A domain. 6 cysteine pairs are disulfide-bonded: Cys99/Cys254, Cys120/Cys141, Cys258/Cys276, Cys281/Cys290, Cys306/Cys339, and Cys366/Cys386. His150 contributes to the Zn(2+) binding site. The active site involves Glu151. His154 and His160 together coordinate Zn(2+). Asn181 carries N-linked (GlcNAc...) asparagine glycosylation. The EGF-like domain maps to 250–291 (VLYNCHERCANTLNRCQQGGYPAPSDCSQCVCPDGFGGNFCE). The CUB domain maps to 306-428 (CGGVLWASET…LDFNIEYRAV (123 aa)). A glycan (N-linked (GlcNAc...) asparagine) is linked at Asn377.

Requires Zn(2+) as cofactor.

The protein localises to the secreted. Functionally, metalloprotease. The chain is Zinc metalloproteinase nas-27 (nas-27) from Caenorhabditis elegans.